A 176-amino-acid chain; its full sequence is MILANDELKRLISLGRLKVEPLAPDTVRENGLDLRIGGEYAIYAYEGAVVKPCELDSARPLFRVVKADEVVIPPRNFVLLTTEEYVKMPDDVVGLANLRSTLARYGLVIPPTVVDAGFEGNITIEVVNESPNTIVLRRGMRFLHLILVKAEGRALYSGTYQGQRGVTPPKGLRGEC.

Residues 99 to 104 and Asp115 each bind dCTP; that span reads RSTLAR. Glu125 serves as the catalytic Proton donor/acceptor. Gln163 serves as a coordination point for dCTP.

Belongs to the dCTP deaminase family. Homotrimer.

It carries out the reaction dCTP + H2O + H(+) = dUTP + NH4(+). It functions in the pathway pyrimidine metabolism; dUMP biosynthesis; dUMP from dCTP (dUTP route): step 1/2. In terms of biological role, catalyzes the deamination of dCTP to dUTP. This is dCTP deaminase from Pyrobaculum neutrophilum (strain DSM 2338 / JCM 9278 / NBRC 100436 / V24Sta) (Thermoproteus neutrophilus).